Here is a 190-residue protein sequence, read N- to C-terminus: Orotate phosphoribosyltransferase (190 aa).

114-122 (EDVITTGGS) provides a ligand contact to 5-phospho-alpha-D-ribose 1-diphosphate. Residues threonine 118 and arginine 146 each contribute to the orotate site.

The protein belongs to the purine/pyrimidine phosphoribosyltransferase family. PyrE subfamily. As to quaternary structure, homodimer. Mg(2+) is required as a cofactor.

The enzyme catalyses orotidine 5'-phosphate + diphosphate = orotate + 5-phospho-alpha-D-ribose 1-diphosphate. Its pathway is pyrimidine metabolism; UMP biosynthesis via de novo pathway; UMP from orotate: step 1/2. Catalyzes the transfer of a ribosyl phosphate group from 5-phosphoribose 1-diphosphate to orotate, leading to the formation of orotidine monophosphate (OMP). The protein is Orotate phosphoribosyltransferase of Pelotomaculum thermopropionicum (strain DSM 13744 / JCM 10971 / SI).